We begin with the raw amino-acid sequence, 290 residues long: Poly-beta-1,6-N-acetyl-D-glucosamine N-deacetylase (290 aa).

The signal sequence occupies residues 1 to 28 (MKYRKFIILVLSILIILPVSTLDGHHIA). Positions 114-290 (RSVWINFDDM…KRWDGFHEKD (177 aa)) constitute a NodB homology domain.

It belongs to the polysaccharide deacetylase family.

The protein localises to the secreted. It is found in the cell wall. In terms of biological role, catalyzes the N-deacetylation of poly-beta-1,6-N-acetyl-D-glucosamine (PNAG, also referred to as PIA), a biofilm adhesin polysaccharide. N-deacetylation is crucial for attachment of the polysaccharide to the bacterial cell surface; it leads to the introduction of positive charges in the otherwise neutral PIA polymer, allowing electrostatic interactions. This Staphylococcus aureus (strain NCTC 8325 / PS 47) protein is Poly-beta-1,6-N-acetyl-D-glucosamine N-deacetylase (icaB).